The sequence spans 228 residues: Uracil-DNA glycosylase (228 aa).

D64 (proton acceptor) is an active-site residue.

This sequence belongs to the uracil-DNA glycosylase (UDG) superfamily. UNG family.

It is found in the cytoplasm. It catalyses the reaction Hydrolyzes single-stranded DNA or mismatched double-stranded DNA and polynucleotides, releasing free uracil.. In terms of biological role, excises uracil residues from the DNA which can arise as a result of misincorporation of dUMP residues by DNA polymerase or due to deamination of cytosine. The polypeptide is Uracil-DNA glycosylase (Yersinia pseudotuberculosis serotype IB (strain PB1/+)).